Here is a 284-residue protein sequence, read N- to C-terminus: Elongation factor Ts (284 aa).

The tract at residues 80 to 83 (TDFV) is involved in Mg(2+) ion dislocation from EF-Tu.

The protein belongs to the EF-Ts family.

The protein localises to the cytoplasm. Functionally, associates with the EF-Tu.GDP complex and induces the exchange of GDP to GTP. It remains bound to the aminoacyl-tRNA.EF-Tu.GTP complex up to the GTP hydrolysis stage on the ribosome. This Photobacterium profundum (strain SS9) protein is Elongation factor Ts.